Reading from the N-terminus, the 262-residue chain is Oxidoreductase GME11367 (262 aa).

The protein belongs to the avfA family.

The protein operates within secondary metabolite biosynthesis. Oxidoreductase; part of the gene cluster that mediates the biosynthesis of dibenzodioxocinones such as pestalotiollide B, a novel class of inhibitors against cholesterol ester transfer protein (CEPT). The biosynthesis initiates from condensation of acetate and malonate units catalyzed by the non-reducing PKS pks8/GME11356. Pks8/GME11356 lacks a thioesterase (TE) domain, which is important to the cyclizing of the third ring of atrochrysone carboxylic acid, and the esterase GME11355 might play the role of TE and catalyzes the cyclization reaction of the C ring. The lactamase-like protein GME11357 (or other beta-lactamases in Pestalotiopsis microspora) probably hydrolyzes the thioester bond between the ACP of pks8/GME11356 and the intermediate to release atrochrysone carboxylic acid, which is spontaneously dehydrates to form endocrocin anthrone. Endocrocin anthrone is further converted to emodin via the endocrocin intermediate. Emodin is then oxidized by several enzymes such as the Baeyer-Villiger oxidase GME11358, the oxidoreductase GME11367, the short chain dehydrogenase/reductase GME11373, as well as by other oxidoreductases from the cluster, to modify the A and C rings and open the B ring, and finally yield monodictyphenone. The prenyltransferase GME11375 may catalyze the addition reaction between the C5 side chains and the carbon bone of dibenzodioxocinones. The remaining biochemical reactions to the final product dibenzodioxocinones should be methylation catalyzed by methyltransferase GME11366 and reduction and lactonization reaction catalyzed by a series of oxidordeuctases. In Pestalotiopsis microspora, this protein is Oxidoreductase GME11367.